Reading from the N-terminus, the 393-residue chain is GDP-4-keto-6-deoxy-D-mannose 3-dehydratase (393 aa).

GDP-4-dehydro-alpha-D-rhamnose is bound at residue 30 to 33 (NMFT). Residues 53–73 (YSVMVSSGSTANLLMIAALFF) form a helical membrane-spanning segment. Pyridoxal 5'-phosphate is bound by residues 60–61 (GS), W92, E166, and S187. The active-site Proton donor/acceptor is H192. H219 contributes to the L-glutamate binding site. R223 serves as a coordination point for GDP-4-dehydro-alpha-D-rhamnose. N252 lines the pyridoxal 5'-phosphate pocket. L-glutamate is bound at residue R254. Position 333 (E333) interacts with GDP-4-dehydro-alpha-D-rhamnose.

It belongs to the DegT/DnrJ/EryC1 family. In terms of assembly, homodimer. Pyridoxal 5'-phosphate is required as a cofactor.

The protein localises to the cell membrane. It carries out the reaction GDP-4-dehydro-alpha-D-rhamnose + L-glutamate = GDP-4-dehydro-3,6-dideoxy-alpha-D-mannose + 2-oxoglutarate + NH4(+). The protein operates within nucleotide-sugar metabolism; GDP-L-colitose biosynthesis. Functionally, involved in the biosynthesis of L-colitose, a 3,6-dideoxyhexose present in the O-antigen region of lipopolysaccharides (LPS), where it serves as an antigenic determinant and is vital for bacterial defense and survival. Catalyzes the removal of the C3'-hydroxyl group from GDP-4-keto-6-deoxy-D-mannose via a combined transamination-deoxygenation reaction. The catalysis is initiated by a transamination step in which pyridoxal 5'-phosphate (PLP) is converted to pyridoxamine 5'-phosphate (PMP) in the presence of L-glutamate. This coenzyme then forms a Schiff base with GDP-4-keto-6-deoxy-D-mannose and the resulting adduct undergoes a PMP-mediated beta-dehydration reaction to give a sugar enamine intermediate, which after tautomerization and hydrolysis to release ammonia yields GDP-4-keto-3,6-dideoxy-D-mannose as a product. The polypeptide is GDP-4-keto-6-deoxy-D-mannose 3-dehydratase (Yersinia pseudotuberculosis).